The sequence spans 464 residues: tRNA-2-methylthio-N(6)-dimethylallyladenosine synthase (464 aa).

Positions 19–135 (GSYWITTFGC…LENLLERVDS (117 aa)) constitute an MTTase N-terminal domain. Cys-28, Cys-64, Cys-98, Cys-170, Cys-174, and Cys-177 together coordinate [4Fe-4S] cluster. Positions 156–393 (RDSTICGWVN…NELVEATSRK (238 aa)) constitute a Radical SAM core domain. The 69-residue stretch at 396–464 (QRYLNNTESV…SFSLSGQIYK (69 aa)) folds into the TRAM domain.

The protein belongs to the methylthiotransferase family. MiaB subfamily. Monomer. It depends on [4Fe-4S] cluster as a cofactor.

It is found in the cytoplasm. The enzyme catalyses N(6)-dimethylallyladenosine(37) in tRNA + (sulfur carrier)-SH + AH2 + 2 S-adenosyl-L-methionine = 2-methylsulfanyl-N(6)-dimethylallyladenosine(37) in tRNA + (sulfur carrier)-H + 5'-deoxyadenosine + L-methionine + A + S-adenosyl-L-homocysteine + 2 H(+). Functionally, catalyzes the methylthiolation of N6-(dimethylallyl)adenosine (i(6)A), leading to the formation of 2-methylthio-N6-(dimethylallyl)adenosine (ms(2)i(6)A) at position 37 in tRNAs that read codons beginning with uridine. This Prochlorococcus marinus (strain MIT 9515) protein is tRNA-2-methylthio-N(6)-dimethylallyladenosine synthase.